A 216-amino-acid polypeptide reads, in one-letter code: MTSYKNNNVISLCIMGDGGVGKTAVTIQFISNHFVYYYDPTIEDSYRKQCLVDDQVYMLDILDTAGQDELTAMRDQWIRSCEGFILVYSVTSRSSFDQIQFFREQIIRVLDSDDVPIMMIGNKIDLDDERQVTFQEGKDLARCLGMSFMEVSAKNRTNVEEVFNETVRIVKRKEDPQSHKPSKDSDSKKPLVNTSKIIKKINTRVKQTKTSICKMM.

A GTP-binding site is contributed by 16–23 (GDGGVGKT). The Effector region motif lies at 38–46 (YDPTIEDSY). GTP is bound by residues 63–67 (DTAGQ) and 122–125 (NKID). Residues 171–193 (KRKEDPQSHKPSKDSDSKKPLVN) are disordered. The span at 172–189 (RKEDPQSHKPSKDSDSKK) shows a compositional bias: basic and acidic residues. A Cysteine methyl ester modification is found at Cys-213. The S-geranylgeranyl cysteine moiety is linked to residue Cys-213. The propeptide at 214–216 (KMM) is removed in mature form.

It belongs to the small GTPase superfamily. Ras family.

The protein resides in the cell membrane. The catalysed reaction is GTP + H2O = GDP + phosphate + H(+). Its function is as follows. Ras proteins bind GDP/GTP and possess intrinsic GTPase activity. The sequence is that of Ras-like protein rasW (rasW) from Dictyostelium discoideum (Social amoeba).